The sequence spans 545 residues: Mesoderm induction early response protein 2 (545 aa).

Serine 11 bears the Phosphoserine mark. The segment at 100–189 (DPISDRESEG…SSDTEEDSLP (90 aa)) is disordered. Over residues 140–153 (QSSADDLTPSVTSH) the composition is skewed to polar residues. The region spanning 195–292 (KEIMVGPQFQ…EALRRLRFNV (98 aa)) is the ELM2 domain. One can recognise an SANT domain in the interval 297 to 349 (DGLCAWSEEECRNFEHGFRVHGKNFHLIQANKVRTRSVGECVEYYYLWKKSER). The interval 364 to 464 (YVPSGTTDAD…YQPAVTAPEP (101 aa)) is disordered.

In terms of assembly, part of a complex containing at least CDYL, MIER1, MIER2, HDAC1 and HDAC2.

The protein localises to the nucleus. Functionally, transcriptional repressor. In Homo sapiens (Human), this protein is Mesoderm induction early response protein 2 (MIER2).